The chain runs to 88 residues: Antitoxin VapB21 (88 aa).

Antitoxin component of a type II toxin-antitoxin (TA) system. This chain is Antitoxin VapB21 (vapB21), found in Mycobacterium tuberculosis (strain CDC 1551 / Oshkosh).